The sequence spans 128 residues: Translation initiation factor 5A (128 aa).

Residue lysine 35 is modified to Hypusine.

Belongs to the eIF-5A family.

The protein resides in the cytoplasm. Its function is as follows. Functions by promoting the formation of the first peptide bond. This Methanosarcina acetivorans (strain ATCC 35395 / DSM 2834 / JCM 12185 / C2A) protein is Translation initiation factor 5A (eif5a).